Consider the following 311-residue polypeptide: Probable deoxyhypusine synthase (311 aa).

Residue Lys284 is the Nucleophile of the active site.

It belongs to the deoxyhypusine synthase family. The cofactor is NAD(+).

The enzyme catalyses [eIF5A protein]-L-lysine + spermidine = [eIF5A protein]-deoxyhypusine + propane-1,3-diamine. The protein operates within protein modification; eIF5A hypusination. Functionally, catalyzes the NAD-dependent oxidative cleavage of spermidine and the subsequent transfer of the butylamine moiety of spermidine to the epsilon-amino group of a specific lysine residue of the eIF-5A precursor protein to form the intermediate deoxyhypusine residue. This is Probable deoxyhypusine synthase (dys) from Sulfurisphaera tokodaii (strain DSM 16993 / JCM 10545 / NBRC 100140 / 7) (Sulfolobus tokodaii).